The chain runs to 412 residues: Multifunctional CCA protein (412 aa).

ATP is bound by residues glycine 8 and arginine 11. 2 residues coordinate CTP: glycine 8 and arginine 11. Mg(2+) contacts are provided by aspartate 21 and aspartate 23. Arginine 91, arginine 137, and arginine 140 together coordinate ATP. Residues arginine 91, arginine 137, and arginine 140 each coordinate CTP. The HD domain occupies 228-329; the sequence is TGIHTLMTLS…VKLFDSIDAW (102 aa).

Belongs to the tRNA nucleotidyltransferase/poly(A) polymerase family. Bacterial CCA-adding enzyme type 1 subfamily. Monomer. Can also form homodimers and oligomers. The cofactor is Mg(2+). Ni(2+) is required as a cofactor.

It catalyses the reaction a tRNA precursor + 2 CTP + ATP = a tRNA with a 3' CCA end + 3 diphosphate. The catalysed reaction is a tRNA with a 3' CCA end + 2 CTP + ATP = a tRNA with a 3' CCACCA end + 3 diphosphate. Its function is as follows. Catalyzes the addition and repair of the essential 3'-terminal CCA sequence in tRNAs without using a nucleic acid template. Adds these three nucleotides in the order of C, C, and A to the tRNA nucleotide-73, using CTP and ATP as substrates and producing inorganic pyrophosphate. tRNA 3'-terminal CCA addition is required both for tRNA processing and repair. Also involved in tRNA surveillance by mediating tandem CCA addition to generate a CCACCA at the 3' terminus of unstable tRNAs. While stable tRNAs receive only 3'-terminal CCA, unstable tRNAs are marked with CCACCA and rapidly degraded. This is Multifunctional CCA protein from Shigella flexneri.